Here is a 337-residue protein sequence, read N- to C-terminus: DNA-directed RNA polymerase subunit alpha (337 aa).

The interval 1-226 (MLIAQRPTLT…ELFGLARELN (226 aa)) is alpha N-terminal domain (alpha-NTD). Residues 243-337 (LAADLALEIE…DTSFAEDEQL (95 aa)) are alpha C-terminal domain (alpha-CTD). The disordered stretch occupies residues 315–337 (FDPSAVVNDFEDDDTSFAEDEQL). Acidic residues predominate over residues 323 to 337 (DFEDDDTSFAEDEQL).

Belongs to the RNA polymerase alpha chain family. Homodimer. The RNAP catalytic core consists of 2 alpha, 1 beta, 1 beta' and 1 omega subunit. When a sigma factor is associated with the core the holoenzyme is formed, which can initiate transcription.

The catalysed reaction is RNA(n) + a ribonucleoside 5'-triphosphate = RNA(n+1) + diphosphate. Its function is as follows. DNA-dependent RNA polymerase catalyzes the transcription of DNA into RNA using the four ribonucleoside triphosphates as substrates. This Kineococcus radiotolerans (strain ATCC BAA-149 / DSM 14245 / SRS30216) protein is DNA-directed RNA polymerase subunit alpha.